The chain runs to 571 residues: uncharacterized protein (571 aa).

Residues 1–3 (MNS) lie on the Cytoplasmic side of the membrane. A helical transmembrane segment spans residues 4-24 (LQILSFVGFTLLVAVITWWKV). Over 25–74 (RKTDTGSQQGYFLAGRSLKAPVIAASLMLTNLSTEQLVGLSGQAYKSGMS) the chain is Periplasmic. A helical membrane pass occupies residues 75-95 (VMGWEVTSAVTLIFLALIFLP). The Cytoplasmic portion of the chain corresponds to 96 to 118 (RYLKRGIATIPDFLEERYDKTTR). Residues 119 to 139 (IIIDFCFLIATGVCFLPIVLY) traverse the membrane as a helical segment. Topologically, residues 140–162 (SGALALNSLFHVGESLQISHGAA) are periplasmic. The helical transmembrane segment at 163–183 (IWLLVILLGLAGILYAVIGGL) threads the bilayer. The Cytoplasmic portion of the chain corresponds to 184–191 (RAMAVADS). Residues 192-212 (INGIGLVIGGLMVPVFGLIAM) form a helical membrane-spanning segment. Over 213–240 (GKGSFMQGIEQLTTVHAEKLNSIGGPTD) the chain is Periplasmic. Residues 241–261 (PLPIGAAFTGLILVNTFYWCT) form a helical membrane-spanning segment. Topologically, residues 262-283 (NQGIVQRTLASKSLAEGQKGAL) are cytoplasmic. Residues 284–304 (LTAVLKMLDPLVLVLPGLIAF) traverse the membrane as a helical segment. Topologically, residues 305 to 324 (HLYQDLPKADMAYPTLVNNV) are periplasmic. The helical transmembrane segment at 325–345 (LPVPMVGFFGAVLFGAVISTF) threads the bilayer. Over 346 to 380 (NGFLNSASTLFSMGIYRRIINQNAEPQQLVTVGRK) the chain is Cytoplasmic. The chain crosses the membrane as a helical span at residues 381–401 (FGFFIAIVSVLVAPWIANAPQ). The Periplasmic portion of the chain corresponds to 402 to 415 (GLYSWMKQLNGIYN). A helical membrane pass occupies residues 416–436 (VPLVTIIIMGFFFPRIPALAA). Residue Lys-437 is a topological domain, cytoplasmic. The helical transmembrane segment at 438-458 (VAMGIGIISYITINYLVKFDF) threads the bilayer. The Periplasmic portion of the chain corresponds to 459 to 460 (HF). Residues 461–481 (LYVLACTFCINVVVMLVIGFI) traverse the membrane as a helical segment. The Cytoplasmic segment spans residues 482–505 (KPRATPFTFKDAFAVDMKPWKNVK). A helical membrane pass occupies residues 506 to 526 (IASIGILFAMIGVYAGLAEFG). Topologically, residues 527–532 (GYGTRW) are periplasmic. The chain crosses the membrane as a helical span at residues 533 to 553 (LAMISYFIAAVVIVYLIFDSW). Residues 554–571 (RHRHDPAVTFTPDGKDSL) lie on the Cytoplasmic side of the membrane.

The protein belongs to the sodium:solute symporter (SSF) (TC 2.A.21) family.

It is found in the cell inner membrane. This is an uncharacterized protein from Escherichia coli (strain K12).